The chain runs to 302 residues: Methionyl-tRNA formyltransferase (302 aa).

108-111 (SILP) is a (6S)-5,6,7,8-tetrahydrofolate binding site.

The protein belongs to the Fmt family.

It carries out the reaction L-methionyl-tRNA(fMet) + (6R)-10-formyltetrahydrofolate = N-formyl-L-methionyl-tRNA(fMet) + (6S)-5,6,7,8-tetrahydrofolate + H(+). Attaches a formyl group to the free amino group of methionyl-tRNA(fMet). The formyl group appears to play a dual role in the initiator identity of N-formylmethionyl-tRNA by promoting its recognition by IF2 and preventing the misappropriation of this tRNA by the elongation apparatus. This Sulfurimonas denitrificans (strain ATCC 33889 / DSM 1251) (Thiomicrospira denitrificans (strain ATCC 33889 / DSM 1251)) protein is Methionyl-tRNA formyltransferase.